Here is a 579-residue protein sequence, read N- to C-terminus: Glypican-3 (579 aa).

Positions 1-24 (MAGTVRTACLLVAMLLGLGCLGQA) are cleaved as a signal peptide. Glutamine 25 bears the Pyrrolidone carboxylic acid mark. Intrachain disulfides connect cysteine 34–cysteine 71, cysteine 64–cysteine 261, cysteine 72–cysteine 264, cysteine 196–cysteine 348, cysteine 251–cysteine 284, cysteine 273–cysteine 421, and cysteine 277–cysteine 409. N-linked (GlcNAc...) asparagine glycosylation is found at asparagine 123 and asparagine 240. The residue at position 351 (serine 351) is a Phosphoserine. A glycan (N-linked (GlcNAc...) asparagine) is linked at asparagine 417. Residues serine 494 and serine 508 are each glycosylated (O-linked (Xyl...) (glycosaminoglycan) serine). The interval 533-552 (DAPGNKQHGNQKDNEITTSH) is disordered. Serine 553 carries the GPI-anchor amidated serine lipid modification. Positions 554–579 (VGNMPSPLKILISVAIYVACFFFLVH) are cleaved as a propeptide — removed in mature form.

This sequence belongs to the glypican family. Heterodimer; disulfide-linked. Cleavage by a furin-like convertase results in production of alpha and beta chains which form a disulfide-linked heterodimer. Interacts with DPP4. Interacts with FGF2. Interacts with WNT5A. Also interacts with WNT3A and WNT7B. Interacts with hedgehog protein SHH; the heparan sulfate chains are not required for the interaction. Also interacts with hedgehog protein IHH. Interacts with CD81. Interacts with Wnt receptors FZD4, FZD7 and FZD8; the heparan sulfate chains are required for the interaction. O-glycosylated; contains heparan sulfate and/or chondroitin sulfate. Post-translationally, cleaved intracellularly by a furin-like convertase to generate 2 subunits, alpha and beta, which remain associated through disulfide bonds and are associated with the cell surface via the GPI-anchor. This processing is essential for its role in inhibition of hedgehog signaling. A second proteolytic event may result in cleavage of the protein on the cell surface, separating it from the GPI-anchor and leading to its shedding from the cell surface. As to expression, in the developing limb, absent from the apical epidermal ridge at 11 dpc but highly expressed in the underlying mesenchyme. Expression in the mesenchyme at this stage is asymmetric with highest levels in the regions of the distal mesenchyme within the progress zone and within the proximal anterior and posterior limb bud. At later developmental stages including 12.5 and 13.5 dpc, expression is restricted to the interdigital webs and the regions of chondrocytic differentiation of the developing bones. In the embryonic kidney, expressed in both the ureteric bud and mesenchymal cells as early as 13.5 dpc. Expression at 16.5 dpc is similar to that at 13.5 dpc but decreases by 18.5 dpc.

It localises to the cell membrane. Cell surface proteoglycan. Negatively regulates the hedgehog signaling pathway when attached via the GPI-anchor to the cell surface by competing with the hedgehog receptor PTC1 for binding to hedgehog proteins. Binding to the hedgehog protein SHH triggers internalization of the complex by endocytosis and its subsequent lysosomal degradation. Positively regulates the canonical Wnt signaling pathway by binding to the Wnt receptor Frizzled and stimulating the binding of the Frizzled receptor to Wnt ligands. Positively regulates the non-canonical Wnt signaling pathway. Binds to CD81 which decreases the availability of free CD81 for binding to the transcriptional repressor HHEX, resulting in nuclear translocation of HHEX and transcriptional repression. Inhibits the dipeptidyl peptidase activity of DPP4. Plays a role in limb patterning and skeletal development by controlling the cellular response to BMP4. Modulates the effects of growth factors BMP2, BMP7 and FGF7 on renal branching morphogenesis. Required for coronary vascular development. Plays a role in regulating cell movements during gastrulation. This is Glypican-3 (Gpc3) from Mus musculus (Mouse).